A 313-amino-acid polypeptide reads, in one-letter code: Ribosomal RNA small subunit methyltransferase H (313 aa).

Residues 35 to 37 (GGH), Asp55, Phe80, Asp102, and Gln109 each bind S-adenosyl-L-methionine.

It belongs to the methyltransferase superfamily. RsmH family.

It localises to the cytoplasm. It carries out the reaction cytidine(1402) in 16S rRNA + S-adenosyl-L-methionine = N(4)-methylcytidine(1402) in 16S rRNA + S-adenosyl-L-homocysteine + H(+). Specifically methylates the N4 position of cytidine in position 1402 (C1402) of 16S rRNA. This Shewanella violacea (strain JCM 10179 / CIP 106290 / LMG 19151 / DSS12) protein is Ribosomal RNA small subunit methyltransferase H.